We begin with the raw amino-acid sequence, 396 residues long: Zinc metalloproteinase nas-19 (396 aa).

The signal sequence occupies residues 1 to 20 (MVRLIHLIGAIILLFSYAYC). Residues 38–231 (RVKRQFERLG…YKINQYYGCW (194 aa)) form the Peptidase M12A domain. Asparagine 79 is a glycosylation site (N-linked (GlcNAc...) asparagine). Intrachain disulfides connect cysteine 82-cysteine 230, cysteine 105-cysteine 130, cysteine 232-cysteine 252, and cysteine 254-cysteine 263. Histidine 138 is a Zn(2+) binding site. Glutamate 139 is a catalytic residue. Zn(2+)-binding residues include histidine 142 and histidine 148. An EGF-like domain is found at 225–264 (NQYYGCWCSKQLECKNGGYTSPSDCSRCNCPKGFFGNLCD). The N-linked (GlcNAc...) asparagine glycan is linked to asparagine 310.

Requires Zn(2+) as cofactor.

The protein localises to the secreted. Its function is as follows. Metalloprotease. This chain is Zinc metalloproteinase nas-19 (nas-19), found in Caenorhabditis elegans.